We begin with the raw amino-acid sequence, 956 residues long: Outer capsid protein VP2 (956 aa).

The protein belongs to the orbivirus VP2 family.

Its subcellular location is the virion. The VP2 protein is one of the two proteins (with VP5) which constitute the virus particle outer capsid. It is the major target of the host immunogenic response. Responsible for viral attachment to target host cell, probably by binding to sialic acid. This attachment induces virion internalization predominantly through clathrin-dependent endocytosis. This is Outer capsid protein VP2 (Segment-2) from Bluetongue virus 11 (isolate USA) (BTV 11).